A 638-amino-acid polypeptide reads, in one-letter code: DNA-directed RNA polymerase I subunit RPA1 (638 aa).

Residues 297-317 (EYDEEDDESSGESEVREGDEE) are compositionally biased toward acidic residues. Residues 297–321 (EYDEEDDESSGESEVREGDEEQEKK) are disordered.

This sequence belongs to the RNA polymerase beta' chain family. In terms of assembly, each class of RNA polymerase is assembled from 9 to 14 different polypeptides. This subunit is the largest component of RNA polymerase I.

Its subcellular location is the nucleus. It carries out the reaction RNA(n) + a ribonucleoside 5'-triphosphate = RNA(n+1) + diphosphate. In terms of biological role, DNA-dependent RNA polymerase catalyzes the transcription of DNA into RNA using the four ribonucleoside triphosphates as substrates. RNA polymerase I is essentially used to transcribe ribosomal DNA units. This is DNA-directed RNA polymerase I subunit RPA1 (RPA1) from Euplotoides octocarinatus (Freshwater ciliate).